A 195-amino-acid polypeptide reads, in one-letter code: Ribonuclease HII (195 aa).

Residues 1 to 195 (MICGIDEAGR…SWRTLRYLNT (195 aa)) form the RNase H type-2 domain. A divalent metal cation is bound by residues aspartate 6, glutamate 7, and aspartate 101.

This sequence belongs to the RNase HII family. The cofactor is Mn(2+). Requires Mg(2+) as cofactor.

The protein resides in the cytoplasm. The catalysed reaction is Endonucleolytic cleavage to 5'-phosphomonoester.. In terms of biological role, endonuclease that specifically degrades the RNA of RNA-DNA hybrids. The polypeptide is Ribonuclease HII (Pyrobaculum islandicum (strain DSM 4184 / JCM 9189 / GEO3)).